The chain runs to 251 residues: Ubiquinone/menaquinone biosynthesis C-methyltransferase UbiE (251 aa).

S-adenosyl-L-methionine-binding positions include Thr-74, Asp-95, and 123–124 (NA).

This sequence belongs to the class I-like SAM-binding methyltransferase superfamily. MenG/UbiE family.

The catalysed reaction is a 2-demethylmenaquinol + S-adenosyl-L-methionine = a menaquinol + S-adenosyl-L-homocysteine + H(+). The enzyme catalyses a 2-methoxy-6-(all-trans-polyprenyl)benzene-1,4-diol + S-adenosyl-L-methionine = a 5-methoxy-2-methyl-3-(all-trans-polyprenyl)benzene-1,4-diol + S-adenosyl-L-homocysteine + H(+). The protein operates within quinol/quinone metabolism; menaquinone biosynthesis; menaquinol from 1,4-dihydroxy-2-naphthoate: step 2/2. It participates in cofactor biosynthesis; ubiquinone biosynthesis. Methyltransferase required for the conversion of demethylmenaquinol (DMKH2) to menaquinol (MKH2) and the conversion of 2-polyprenyl-6-methoxy-1,4-benzoquinol (DDMQH2) to 2-polyprenyl-3-methyl-6-methoxy-1,4-benzoquinol (DMQH2). The sequence is that of Ubiquinone/menaquinone biosynthesis C-methyltransferase UbiE from Erwinia tasmaniensis (strain DSM 17950 / CFBP 7177 / CIP 109463 / NCPPB 4357 / Et1/99).